The following is a 426-amino-acid chain: MKQFDVNEYMALVGRQARAASRGMARAGTAQKNRALLHLAAAIRRDAARLKDVNARDVERARANGQDAAFIDRLTLTDRAIETMAAGLEQIAALPDPIGEISNVKFRPTGIQVGQMRVPLGVIGIIYESRPNVTVDAAALCIKSGNATILRGGSEAIESNGALAALIEEGLADAGLPATAVQVVATPDRAAVGKLITMTEYVDVIVPRGGKSLIARLMEEARVPMIKHLDGICHVYIDVDADIDKAVRICDNAKTQRYAPCNTMETLLVAREVAARALTPLARIYQDKGVELRVCPDTRATLEAAGFSGLKDATEADWHTEYLAPILSIRTVDGVDAAIEHINTYGSAHTDSIVTENYSTGMRFLREVDSASVMINASTRFADGFEYGLGAEIGISNDKLHARGPVGLEGLTSLKYVVFGHGEIRT.

It belongs to the gamma-glutamyl phosphate reductase family.

It is found in the cytoplasm. It catalyses the reaction L-glutamate 5-semialdehyde + phosphate + NADP(+) = L-glutamyl 5-phosphate + NADPH + H(+). It participates in amino-acid biosynthesis; L-proline biosynthesis; L-glutamate 5-semialdehyde from L-glutamate: step 2/2. Its function is as follows. Catalyzes the NADPH-dependent reduction of L-glutamate 5-phosphate into L-glutamate 5-semialdehyde and phosphate. The product spontaneously undergoes cyclization to form 1-pyrroline-5-carboxylate. The sequence is that of Gamma-glutamyl phosphate reductase from Ralstonia nicotianae (strain ATCC BAA-1114 / GMI1000) (Ralstonia solanacearum).